The chain runs to 289 residues: SAGA-associated factor 29kDa (289 aa).

Residues 9 to 36 are a coiled coil; sequence AQQIQDRLKDIQQNIHNVDEERRRAENS. Residues 137 to 278 enclose the SGF29 C-terminal domain; it reads GNYVAKVGDN…VIAYRPTKKG (142 aa). Histone H3K4me3 N-terminus binding stretches follow at residues 179–181 and 225–228; these read DID and QTTC. The tract at residues 249-251 is histone H3K4me3 binding; that stretch reads FED.

This sequence belongs to the SGF29 family. Component of the Spt-Ada-Gcn5 acetyltransferase (SAGA) complex consisting of wda/Taf5L, Saf6, Taf9, Taf10b, Taf12, Ada1, Spt3, Spt7, Spt20, Sf3b3, Sf3b5, Nipped-A/Tra1, a histone acetyltransferase (HAT) module made up of Gcn5, Ada2b (Isoform B), Ada3 and Sgf29, and a deubiquitinase (DUB) module made up of not/nonstop, Sgf11, Atxn7 and e(y)2. Component of the Chiffon histone acetyltransferase (CHAT) complex consisting of Ada3, Sgf29, Gcn5, chif/chiffon and Ada2b (Isoform A).

It is found in the nucleus. Functionally, component of both the SAGA and CHAT histone acetyltransferase complexes, which both predominantly acetylate histone H3. In Drosophila melanogaster (Fruit fly), this protein is SAGA-associated factor 29kDa.